The following is a 172-amino-acid chain: UPF0102 protein Pcryo_2198 (172 aa).

This sequence belongs to the UPF0102 family.

In Psychrobacter cryohalolentis (strain ATCC BAA-1226 / DSM 17306 / VKM B-2378 / K5), this protein is UPF0102 protein Pcryo_2198.